Reading from the N-terminus, the 445-residue chain is 3-phosphoshikimate 1-carboxyvinyltransferase (445 aa).

Positions 1–25 are disordered; sequence MTDSNQPTPLQARKSGALHGTARVP. Residues lysine 28, serine 29, and arginine 33 each contribute to the 3-phosphoshikimate site. Lysine 28 serves as a coordination point for phosphoenolpyruvate. Phosphoenolpyruvate-binding residues include glycine 101 and arginine 129. Positions 175, 177, 328, and 355 each coordinate 3-phosphoshikimate. Glutamine 177 lines the phosphoenolpyruvate pocket. Aspartate 328 acts as the Proton acceptor in catalysis. Phosphoenolpyruvate-binding residues include arginine 359 and arginine 402.

The protein belongs to the EPSP synthase family. In terms of assembly, monomer.

It is found in the cytoplasm. It catalyses the reaction 3-phosphoshikimate + phosphoenolpyruvate = 5-O-(1-carboxyvinyl)-3-phosphoshikimate + phosphate. Its pathway is metabolic intermediate biosynthesis; chorismate biosynthesis; chorismate from D-erythrose 4-phosphate and phosphoenolpyruvate: step 6/7. Functionally, catalyzes the transfer of the enolpyruvyl moiety of phosphoenolpyruvate (PEP) to the 5-hydroxyl of shikimate-3-phosphate (S3P) to produce enolpyruvyl shikimate-3-phosphate and inorganic phosphate. In Rhodopseudomonas palustris (strain TIE-1), this protein is 3-phosphoshikimate 1-carboxyvinyltransferase.